A 476-amino-acid polypeptide reads, in one-letter code: Light-independent protochlorophyllide reductase subunit N (476 aa).

[4Fe-4S] cluster is bound by residues Cys31, Cys56, and Cys116.

This sequence belongs to the BchN/ChlN family. In terms of assembly, protochlorophyllide reductase is composed of three subunits; ChlL, ChlN and ChlB. Forms a heterotetramer of two ChlB and two ChlN subunits. [4Fe-4S] cluster is required as a cofactor.

It is found in the plastid. The protein resides in the chloroplast. The enzyme catalyses chlorophyllide a + oxidized 2[4Fe-4S]-[ferredoxin] + 2 ADP + 2 phosphate = protochlorophyllide a + reduced 2[4Fe-4S]-[ferredoxin] + 2 ATP + 2 H2O. It functions in the pathway porphyrin-containing compound metabolism; chlorophyll biosynthesis (light-independent). Its function is as follows. Component of the dark-operative protochlorophyllide reductase (DPOR) that uses Mg-ATP and reduced ferredoxin to reduce ring D of protochlorophyllide (Pchlide) to form chlorophyllide a (Chlide). This reaction is light-independent. The NB-protein (ChlN-ChlB) is the catalytic component of the complex. This is Light-independent protochlorophyllide reductase subunit N from Staurastrum punctulatum (Green alga).